The primary structure comprises 306 residues: 3-methyl-2-oxobutanoate hydroxymethyltransferase (306 aa).

Mg(2+)-binding residues include Asp53 and Asp96. 3-methyl-2-oxobutanoate is bound by residues 53 to 54 (DS), Asp96, and Lys126. Residue Glu128 participates in Mg(2+) binding. The Proton acceptor role is filled by Glu195.

Belongs to the PanB family. Homodecamer; pentamer of dimers. Mg(2+) is required as a cofactor.

The protein resides in the cytoplasm. The enzyme catalyses 3-methyl-2-oxobutanoate + (6R)-5,10-methylene-5,6,7,8-tetrahydrofolate + H2O = 2-dehydropantoate + (6S)-5,6,7,8-tetrahydrofolate. The protein operates within cofactor biosynthesis; (R)-pantothenate biosynthesis; (R)-pantoate from 3-methyl-2-oxobutanoate: step 1/2. Functionally, catalyzes the reversible reaction in which hydroxymethyl group from 5,10-methylenetetrahydrofolate is transferred onto alpha-ketoisovalerate to form ketopantoate. This Anaeromyxobacter sp. (strain K) protein is 3-methyl-2-oxobutanoate hydroxymethyltransferase.